The chain runs to 96 residues: Small ribosomal subunit protein bS18 (96 aa).

It belongs to the bacterial ribosomal protein bS18 family. Part of the 30S ribosomal subunit. Forms a tight heterodimer with protein bS6.

In terms of biological role, binds as a heterodimer with protein bS6 to the central domain of the 16S rRNA, where it helps stabilize the platform of the 30S subunit. The sequence is that of Small ribosomal subunit protein bS18 from Borreliella afzelii (strain PKo) (Borrelia afzelii).